The primary structure comprises 572 residues: Probable D-xylulose kinase A (572 aa).

Substrate is bound by residues histidine 95, arginine 166, aspartate 282, and asparagine 283. Residues tryptophan 365, 470-471 (GG), and asparagine 474 contribute to the ATP site.

This sequence belongs to the FGGY kinase family.

It is found in the cytoplasm. The enzyme catalyses D-xylulose + ATP = D-xylulose 5-phosphate + ADP + H(+). Its function is as follows. Highly specific D-xylulose kinase which participates in the catabolism of xylose. Xylose is a major component of hemicelluloses such as xylan. Most fungi utilize D-xylose via three enzymatic reactions, xylose reductase (XR), xylitol dehydrogenase (XDH), and xylulokinase, to form xylulose 5-phosphate, which enters pentose phosphate pathway. This chain is Probable D-xylulose kinase A (xkiA), found in Aspergillus flavus (strain ATCC 200026 / FGSC A1120 / IAM 13836 / NRRL 3357 / JCM 12722 / SRRC 167).